The chain runs to 589 residues: Complement component C8 beta chain (589 aa).

Residues 1–31 (MKTGAQVWRALAKSCLLCAALGCLHLPGARG) form the signal peptide. Positions 32 to 53 (EKPDFFETNAVNGSLVRSRPVR) are excised as a propeptide. Asn43 carries N-linked (GlcNAc...) asparagine glycosylation. The TSP type-1 1 domain maps to 63-116 (DCQLSTWSSWTACDPCQKKRYRHTYLLRPSQFYGELCDFSDKEVEDCVTNRACR). 7 disulfides stabilise this stretch: Cys64–Cys99, Cys75–Cys109, Cys78–Cys115, Cys121–Cys132, Cys126–Cys145, Cys139–Cys154, and Cys161–Cys199. C-linked (Man) tryptophan glycosylation is found at Trp69 and Trp72. Residues 120 to 155 (RCEGFVCAQTGRCVNRRLLCNGDNDCGDQSDEANCR) enclose the LDL-receptor class A domain. Ca(2+)-binding residues include Leu137, Asn140, Asp142, Asp144, Asp150, and Glu151. An MACPF domain is found at 157–503 (IYKKCSQDME…EFQMEVSSCR (347 aa)). N-linked (GlcNAc...) asparagine glycosylation occurs at Asn242. The next 4 membrane-spanning stretches (beta stranded) occupy residues 251-258 (SSFKFGFK), 261-268 (GLVEFGVR), 378-385 (AGGGFQIG), and 391-398 (VYLKLGVS). A disulfide bridge links Cys377 with Cys402. Thr417 carries the post-translational modification Phosphothreonine. Cystine bridges form between Cys502/Cys549, Cys504/Cys520, Cys507/Cys522, and Cys524/Cys533. One can recognise an EGF-like domain in the interval 504-534 (CAPCRNNGVPILKESRCECICPAGFQGVACE). Residues 544 to 587 (DGKWSCWSDWSPCSGGRKTRQRQCNNPAPQRGGSPCSGPASETL) enclose the TSP type-1 2 domain. C-linked (Man) tryptophan glycans are attached at residues Trp550 and Trp553. Cys556 and Cys589 are disulfide-bonded. Positions 556-589 (CSGGRKTRQRQCNNPAPQRGGSPCSGPASETLDC) are disordered.

Belongs to the complement C6/C7/C8/C9 family. Heterotrimer of 3 chains: alpha (C8A), beta (C8B) and gamma (C8G); the alpha and gamma chains are disulfide bonded. Component of the membrane attack complex (MAC), composed of complement C5b, C6, C7, C8A, C8B, C8G and multiple copies of the pore-forming subunit C9. Post-translationally, N-glycosylated; contains one or two bound glycans. Not O-glycosylated.

It localises to the secreted. Its subcellular location is the target cell membrane. Its activity is regulated as follows. Membrane attack complex (MAC) assembly is inhibited by CD59, thereby protecting self-cells from damage during complement activation. CD59 acts by binding to the beta-haipins of C8 (C8A and C8B), forming an intermolecular beta-sheet that prevents incorporation of the multiple copies of C9 required for complete formation of the osmolytic pore. MAC assembly is also inhibited by clusterin (CLU) chaperones that inhibit polymerization of C9. In terms of biological role, component of the membrane attack complex (MAC), a multiprotein complex activated by the complement cascade, which inserts into a target cell membrane and forms a pore, leading to target cell membrane rupture and cell lysis. The MAC is initiated by proteolytic cleavage of C5 into complement C5b in response to the classical, alternative, lectin and GZMK complement pathways. The complement pathways consist in a cascade of proteins that leads to phagocytosis and breakdown of pathogens and signaling that strengthens the adaptive immune system. C8B, together with C8A and C8G, inserts into the target membrane, but does not form pores by itself. During MAC assembly, associates with C5b, C6 and C7 to form the C5b8 intermediate complex that inserts into the target membrane and traverses the bilayer increasing membrane rigidity. The polypeptide is Complement component C8 beta chain (C8b) (Rattus norvegicus (Rat)).